A 186-amino-acid polypeptide reads, in one-letter code: dCTP deaminase (186 aa).

A dCTP-binding site is contributed by 107–112 (KSTYAR). Catalysis depends on glutamate 133, which acts as the Proton donor/acceptor. Positions 152, 166, and 176 each coordinate dCTP.

It belongs to the dCTP deaminase family. In terms of assembly, homotrimer.

The catalysed reaction is dCTP + H2O + H(+) = dUTP + NH4(+). The protein operates within pyrimidine metabolism; dUMP biosynthesis; dUMP from dCTP (dUTP route): step 1/2. Its function is as follows. Catalyzes the deamination of dCTP to dUTP. The sequence is that of dCTP deaminase from Campylobacter fetus subsp. fetus (strain 82-40).